The primary structure comprises 477 residues: Ankyrin repeat, SAM and basic leucine zipper domain-containing protein 1 (477 aa).

Residues S17, S18, and S20 each carry the phosphoserine modification. ANK repeat units lie at residues 46-76 (EKKE…SVDA), 80-109 (YGWT…NASF), 112-146 (DKQT…DPNV), 150-179 (RLMT…EVNT), 183-212 (NGYT…NKML), and 216-245 (DGKL…PLEG). The region spanning 274–336 (SYAAFGDLEV…KILAALKELE (63 aa)) is the SAM domain.

As to quaternary structure, interacts with DDX4, PIWIL1, RANBP9 and TDRD1.

The protein resides in the cytoplasm. Functionally, plays a central role during spermatogenesis by repressing transposable elements and preventing their mobilization, which is essential for the germline integrity. Acts via the piRNA metabolic process, which mediates the repression of transposable elements during meiosis by forming complexes composed of piRNAs and Piwi proteins and governs the methylation and subsequent repression of transposons. Its association with pi-bodies suggests a participation in the primary piRNAs metabolic process. Required prior to the pachytene stage to facilitate the production of multiple types of piRNAs, including those associated with repeats involved in the regulation of retrotransposons. May act by mediating protein-protein interactions during germ cell maturation. The chain is Ankyrin repeat, SAM and basic leucine zipper domain-containing protein 1 (ASZ1) from Callithrix jacchus (White-tufted-ear marmoset).